The primary structure comprises 429 residues: 3-phosphoshikimate 1-carboxyvinyltransferase (429 aa).

3 residues coordinate 3-phosphoshikimate: lysine 20, serine 21, and arginine 25. A phosphoenolpyruvate-binding site is contributed by lysine 20. Residues glycine 89 and arginine 118 each coordinate phosphoenolpyruvate. 3-phosphoshikimate-binding residues include serine 164, serine 165, glutamine 166, serine 192, aspartate 311, and lysine 338. Residue glutamine 166 coordinates phosphoenolpyruvate. Residue aspartate 311 is the Proton acceptor of the active site. Residues arginine 342 and arginine 384 each contribute to the phosphoenolpyruvate site.

It belongs to the EPSP synthase family. As to quaternary structure, monomer.

The protein localises to the cytoplasm. The catalysed reaction is 3-phosphoshikimate + phosphoenolpyruvate = 5-O-(1-carboxyvinyl)-3-phosphoshikimate + phosphate. It functions in the pathway metabolic intermediate biosynthesis; chorismate biosynthesis. Catalyzes the transfer of the enolpyruvyl moiety of phosphoenolpyruvate (PEP) to the 5-hydroxyl of shikimate-3-phosphate (S3P) to produce enolpyruvyl shikimate-3-phosphate and inorganic phosphate. The chain is 3-phosphoshikimate 1-carboxyvinyltransferase from Methanococcus maripaludis (strain C7 / ATCC BAA-1331).